The following is a 153-amino-acid chain: UPF0260 protein YcgN (153 aa).

The protein belongs to the UPF0260 family.

This is UPF0260 protein YcgN from Salmonella dublin (strain CT_02021853).